The sequence spans 388 residues: Na(+)/H(+) antiporter NhaA (388 aa).

11 helical membrane-spanning segments follow: residues 14-34, 59-79, 95-115, 125-145, 154-174, 179-199, 219-239, 254-274, 287-307, 328-348, and 356-376; these read GGIILIIAAVLAMLMANSGFT, MLLWINDALMAVFFLLIGLEV, AFPVIAAIGGMIVPALLYLAF, GWAIPAATDIAFALGVLALLG, IFLMALAIIDDLGAIVIIALF, LSMVSLGVAAFAIVLLAVLNL, VLKSGVHATLAGVIVGFFIPL, VLHPWVAYLILPLFAFANAGV, ILPLGIIAGLLIGKPLGISLF, IMAVGILCGIGFTMSIFIASL, and ALINWAKLGILIGSLLSAVIG.

Belongs to the NhaA Na(+)/H(+) (TC 2.A.33) antiporter family.

It is found in the cell inner membrane. The enzyme catalyses Na(+)(in) + 2 H(+)(out) = Na(+)(out) + 2 H(+)(in). Na(+)/H(+) antiporter that extrudes sodium in exchange for external protons. The sequence is that of Na(+)/H(+) antiporter NhaA from Citrobacter koseri (strain ATCC BAA-895 / CDC 4225-83 / SGSC4696).